The primary structure comprises 335 residues: Mycobacterial beta-ketoacyl-[acyl-carrier-protein] synthase III (335 aa).

Catalysis depends on residues Cys-122 and His-258. Positions 259–263 are ACP-binding; sequence QANSR. Asn-289 is a catalytic residue.

Belongs to the thiolase-like superfamily. FabH family. Homodimer.

Its subcellular location is the cytoplasm. The enzyme catalyses malonyl-[ACP] + dodecanoyl-CoA + H(+) = 3-oxotetradecanoyl-[ACP] + CO2 + CoA. Its pathway is lipid metabolism; fatty acid biosynthesis. It functions in the pathway lipid metabolism; mycolic acid biosynthesis. Catalyzes the condensation reaction of fatty acid synthesis by the addition to an acyl acceptor of two carbons from malonyl-ACP. Catalyzes the first condensation reaction which initiates fatty acid synthesis and may therefore play a role in governing the total rate of fatty acid production. Possesses both acetoacetyl-ACP synthase and acetyl transacylase activities. Its substrate specificity determines the biosynthesis of branched-chain and/or straight-chain of fatty acids. This chain is Mycobacterial beta-ketoacyl-[acyl-carrier-protein] synthase III, found in Mycolicibacterium paratuberculosis (strain ATCC BAA-968 / K-10) (Mycobacterium paratuberculosis).